Consider the following 1169-residue polypeptide: Rabankyrin-5 (1169 aa).

Position 2 is an N-acetylalanine (Ala-2). In terms of domain architecture, BTB spans 68-130 (SDLKIKVGDR…IYTDELEFRE (63 aa)). ANK repeat units lie at residues 217-247 (KTEY…QLPG), 255-284 (NGDL…DVDM), 288-317 (SGWS…FVNA), 322-362 (AQET…NPNM), and 366-396 (KGRT…DLEL). Residue Ser-270 is modified to Phosphoserine. The NPF signature appears at 421 to 423 (NPF). ANK repeat units lie at residues 490–519 (WGET…NPNL), 542–572 (HLQT…ALHA), 588–617 (RDQT…AIND), 621–650 (DGQT…DINV), 654–683 (DGET…DMSV), 687–716 (KGNP…DATC), 724–753 (CLQT…DVNS), 769–798 (DGQT…NVNA), 802–832 (EGRT…HLNV), 836–865 (QGLT…GAAE), 870–899 (KGRN…NVNS), 905–934 (SKLT…KVNE), 938–967 (HRQT…DFAA), 971–1001 (NGNN…DAEA), 1005–1037 (RGQS…GYPL), and 1043–1072 (DGST…RLGV). Residues 650–759 (VRTQDGETAL…DVNSPRQPGA (110 aa)) are interaction with RHOD and RAB5A. The segment at 1104–1164 (WCDGSYCYEC…VCNICFDVLT (61 aa)) adopts an FYVE-type zinc-finger fold. 8 residues coordinate Zn(2+): Cys-1110, Cys-1113, Cys-1126, Cys-1129, Cys-1134, Cys-1137, Cys-1156, and Cys-1159.

Interacts with RAB5A (in GTP-bound form). Interacts with RHOD (independent of GTP-loaded status). Interacts with EHD1. Interacts with VPS26A; the interaction is independent of EHD1 and is indicative for an association with the cargo recognition subcomplex of the retromer complex. As to expression, high expression in whole adult brain and intermediate expression in all other tissues and specific brain regions examined, including fetal brain.

The protein resides in the cytoplasm. Its subcellular location is the endosome membrane. It localises to the early endosome. Functionally, proposed effector of Rab5. Binds to phosphatidylinositol 3-phosphate (PI(3)P). Involved in homotypic early endosome fusion and to a lesser extent in heterotypic fusion of chlathrin-coated vesicles with early endosomes. Involved in macropinocytosis; the function is dependent on Rab5-GTP. Required for correct endosomal localization. Involved in the internalization and trafficking of activated tyrosine kinase receptors such as PDGFRB. Regulates the subcellular localization of the retromer complex in a EHD1-dependent manner. Involved in endosome-to-Golgi transport and biosynthetic transport to late endosomes and lysosomes indicative for a regulation of retromer complex-mediated retrograde transport. The chain is Rabankyrin-5 (ANKFY1) from Homo sapiens (Human).